A 439-amino-acid polypeptide reads, in one-letter code: Serine hydroxymethyltransferase (439 aa).

Ala126–Val128 provides a ligand contact to (6S)-5,6,7,8-tetrahydrofolate. Position 232 is an N6-(pyridoxal phosphate)lysine (Lys232).

This sequence belongs to the SHMT family. Homodimer. The cofactor is pyridoxal 5'-phosphate.

The protein localises to the cytoplasm. The protein operates within amino-acid biosynthesis; glycine biosynthesis; glycine from L-serine: step 1/1. In terms of biological role, catalyzes the reversible interconversion of serine and glycine with a modified folate serving as the one-carbon carrier. Also exhibits a pteridine-independent aldolase activity toward beta-hydroxyamino acids, producing glycine and aldehydes, via a retro-aldol mechanism. In Staphylothermus marinus (strain ATCC 43588 / DSM 3639 / JCM 9404 / F1), this protein is Serine hydroxymethyltransferase.